A 170-amino-acid chain; its full sequence is Centrin-2 (170 aa).

The interval 1–21 (MQRGALRGASPTARRRLVDRP) is disordered. 4 consecutive EF-hand domains span residues 26–61 (DEIE…LGFE), 62–97 (TKNP…KLGD), 99–134 (ESRE…LGET), and 135–170 (MSED…KTFP). Ca(2+) is bound by residues Asp39, Asp41, Ser43, Met45, and Glu50.

This sequence belongs to the centrin family. Monomer. Does not homooligomerize.

Its subcellular location is the cytoplasm. The protein resides in the cytoskeleton. It localises to the microtubule organizing center. It is found in the centrosome. In tachyzoites, plays an essential role in microneme secretion that ensures parasite motility and attachment to, invasion of and egress from host cells. Also involved in the architecture of the peripheral annuli where it appears to regulate the localization of PAP2. In association with the myosin motor MyoJ, involved in the constriction of the basal complex at the end of daughter cell division in an actin-dependent manner; the basal complex is a cytoskeletal structure formed at the tachyzoite basal pole during daughter cell formation. May be involved in parasite replication. This is Centrin-2 from Toxoplasma gondii (strain ATCC 50611 / Me49).